Reading from the N-terminus, the 100-residue chain is Small ribosomal subunit protein uS14c (100 aa).

It belongs to the universal ribosomal protein uS14 family. Part of the 30S ribosomal subunit.

The protein localises to the plastid. It is found in the chloroplast. Its function is as follows. Binds 16S rRNA, required for the assembly of 30S particles. In Cycas taitungensis (Prince sago), this protein is Small ribosomal subunit protein uS14c.